The chain runs to 107 residues: U1-lycotoxin-Ls1b (107 aa).

Positions 1-20 (MMKVLVVVALLVTLISYSSS) are cleaved as a signal peptide. Positions 21–41 (EGIDDLEADELSSLMANEQTR) are excised as a propeptide. 4 disulfide bridges follow: Cys44-Cys59, Cys51-Cys68, Cys58-Cys86, and Cys70-Cys84.

The protein belongs to the neurotoxin 19 (CSTX) family. 04 (U1-Lctx) subfamily. In terms of tissue distribution, expressed by the venom gland.

The protein resides in the secreted. This chain is U1-lycotoxin-Ls1b, found in Lycosa singoriensis (Wolf spider).